Here is an 822-residue protein sequence, read N- to C-terminus: Valine--tRNA ligase (822 aa).

The short motif at 41–51 (PNVTGQLHLGH) is the 'HIGH' region element. Positions 511 to 515 (KMSKS) match the 'KMSKS' region motif. Position 514 (Lys-514) interacts with ATP. Positions 765 to 822 (EQKGRELKEIQFLKSEILRAEKILTNKGFLEKAPREKIDLERTKLEKLKEKLAFYEKK) form a coiled coil.

This sequence belongs to the class-I aminoacyl-tRNA synthetase family. ValS type 1 subfamily. In terms of assembly, monomer.

The protein resides in the cytoplasm. The catalysed reaction is tRNA(Val) + L-valine + ATP = L-valyl-tRNA(Val) + AMP + diphosphate. Its function is as follows. Catalyzes the attachment of valine to tRNA(Val). As ValRS can inadvertently accommodate and process structurally similar amino acids such as threonine, to avoid such errors, it has a 'posttransfer' editing activity that hydrolyzes mischarged Thr-tRNA(Val) in a tRNA-dependent manner. The sequence is that of Valine--tRNA ligase from Mesomycoplasma hyopneumoniae (strain 232) (Mycoplasma hyopneumoniae).